A 629-amino-acid polypeptide reads, in one-letter code: Translation initiation factor IF-2 (629 aa).

Residues 1–20 (MAKNIKTNKKPQQVNKKEMS) are disordered. Residues 127–297 (HRAPIVTIMG…LLIAEMQDYK (171 aa)) enclose the tr-type G domain. Residues 136–143 (GHVDHGKT) form a G1 region. GTP is bound at residue 136 to 143 (GHVDHGKT). The tract at residues 161-165 (GITQA) is G2. The interval 183 to 186 (DTPG) is G3. Residues 183–187 (DTPGH) and 237–240 (NKCD) each bind GTP. Positions 237–240 (NKCD) are G4. The interval 273-275 (SAK) is G5.

Belongs to the TRAFAC class translation factor GTPase superfamily. Classic translation factor GTPase family. IF-2 subfamily.

The protein localises to the cytoplasm. In terms of biological role, one of the essential components for the initiation of protein synthesis. Protects formylmethionyl-tRNA from spontaneous hydrolysis and promotes its binding to the 30S ribosomal subunits. Also involved in the hydrolysis of GTP during the formation of the 70S ribosomal complex. The chain is Translation initiation factor IF-2 from Mesoplasma florum (strain ATCC 33453 / NBRC 100688 / NCTC 11704 / L1) (Acholeplasma florum).